The following is a 206-amino-acid chain: CMP-5'-(N-acetyl-N-hydroxy-3-aminopropyl)phosphonate hydrolase (206 aa).

Residues Val-37–Gly-166 enclose the Nudix hydrolase domain. The Nudix box motif lies at Gly-74–Gly-95. A compositionally biased stretch (low complexity) spans Arg-177–Gly-194. The disordered stretch occupies residues Arg-177 to Gly-206.

This sequence belongs to the Nudix hydrolase family. Mg(2+) is required as a cofactor.

The enzyme catalyses CMP-5'-(N-acetyl-N-hydroxy-3-aminopropyl)phosphonate + H2O = 3-(N-acetyl-N-hydroxy)aminopropylphosphonate + CMP + H(+). It functions in the pathway antibiotic biosynthesis. Its function is as follows. Nucleotide hydrolase involved in the biosynthesis of the phosphonate antibiotic FR-900098, a potent antimalarial agent that acts as an inhibitor of 1-deoxy-D-xylulose 5-phosphate reductoisomerase (DXR), the first enzyme in the nonmevalonate pathway for isoprenoid biosynthesis. Catalyzes the hydrolysis of CMP-5'-(N-acetyl-N-hydroxy-3-aminopropyl)phosphonate (CMP-5'-FR-900098) to produce CMP and the final compound FR-900098. In vitro, has broad substrate specificity and also catalyzes the hydrolysis of all the other CMP-containing intermediates within the pathway and shows low activity toward CTP. This is CMP-5'-(N-acetyl-N-hydroxy-3-aminopropyl)phosphonate hydrolase from Streptomyces rubellomurinus (strain ATCC 31215).